Consider the following 50-residue polypeptide: Large ribosomal subunit protein bL32A (50 aa).

The span at 1 to 19 (MAVPKRRKSRSNTRHRRSQ) shows a compositional bias: basic residues. Residues 1–21 (MAVPKRRKSRSNTRHRRSQWK) are disordered.

Belongs to the bacterial ribosomal protein bL32 family.

The protein is Large ribosomal subunit protein bL32A of Saccharopolyspora erythraea (strain ATCC 11635 / DSM 40517 / JCM 4748 / NBRC 13426 / NCIMB 8594 / NRRL 2338).